The following is a 189-amino-acid chain: MKEIKPAILFFIVFTILCGGVYPAVVTSIAHAVFPKQAKGSFITDKSGREIGSALIGQPFSDARYFWPRPSATTDFGYNPMTSGGSNSGPTNPDFLKTVGDRVKSLHDTGITGNIPADLVEASASGLDPHITPEAAKVQVPRVAKARGMTMEELKKLVDARTEDRQLGFLGEQRVNVLELNLELDKLSR.

Residues 6 to 26 (PAILFFIVFTILCGGVYPAVV) traverse the membrane as a helical segment.

Belongs to the KdpC family. As to quaternary structure, the system is composed of three essential subunits: KdpA, KdpB and KdpC.

It is found in the cell inner membrane. Its function is as follows. Part of the high-affinity ATP-driven potassium transport (or Kdp) system, which catalyzes the hydrolysis of ATP coupled with the electrogenic transport of potassium into the cytoplasm. This subunit acts as a catalytic chaperone that increases the ATP-binding affinity of the ATP-hydrolyzing subunit KdpB by the formation of a transient KdpB/KdpC/ATP ternary complex. This is Potassium-transporting ATPase KdpC subunit from Geotalea uraniireducens (strain Rf4) (Geobacter uraniireducens).